Reading from the N-terminus, the 566-residue chain is Folate-like transporter DDB_G0272544 (566 aa).

Residues Arg-24 to Asn-81 adopt a coiled-coil conformation. A disordered region spans residues Asn-25 to Arg-46. Residues Asp-27–Glu-40 show a composition bias toward acidic residues. A run of 11 helical transmembrane segments spans residues Val-148–Ile-168, Val-171–Leu-191, Ile-194–Leu-214, Val-226–Glu-246, Val-252–Phe-272, Ile-304–Phe-324, Ser-332–Pro-352, Gly-364–Gly-384, Val-388–Val-408, Ile-420–Ser-440, and Tyr-458–Leu-478. A coiled-coil region spans residues Tyr-517–Asn-544. A compositionally biased stretch (low complexity) spans Asn-526–Asn-556. A disordered region spans residues Asn-526–Lys-566.

This sequence belongs to the reduced folate carrier (RFC) transporter (TC 2.A.48) family.

It is found in the membrane. Functionally, folate transporter. The sequence is that of Folate-like transporter DDB_G0272544 from Dictyostelium discoideum (Social amoeba).